The chain runs to 771 residues: Nitrogen regulation protein NtrY (771 aa).

4 helical membrane passes run 22–46 (FGLF…ILMG), 56–76 (VVIS…AMVG), 99–122 (IVGL…SLTL), and 295–319 (VAFA…GLNF). The 54-residue stretch at 321–374 (KWLVAPIRRLMSAADHVAEGNLDVRVPIYRAEGDLASLAETFNKMTHELRSQRE) folds into the HAMP domain. One can recognise a PAS domain in the interval 386–458 (RRRFTEAVLS…HARQRSVQGN (73 aa)). Residues 511-728 (RIAHEIKNPL…WIRLTLKAEG (218 aa)) form the Histidine kinase domain. A Phosphohistidine; by autocatalysis modification is found at His514. Positions 727–771 (EGPKAEPTDASTKATGAATPAAPAASAMARDAAADSAARGKNERT) are disordered. The segment covering 740–763 (ATGAATPAAPAASAMARDAAADSA) has biased composition (low complexity).

The protein localises to the cell membrane. It catalyses the reaction ATP + protein L-histidine = ADP + protein N-phospho-L-histidine.. Its function is as follows. Member of the two-component regulatory system NtrY/NtrX involved in nitrogen level control. Probably activates NtrX by phosphorylation. The chain is Nitrogen regulation protein NtrY (ntrY) from Azorhizobium caulinodans (strain ATCC 43989 / DSM 5975 / JCM 20966 / LMG 6465 / NBRC 14845 / NCIMB 13405 / ORS 571).